A 216-amino-acid polypeptide reads, in one-letter code: Ras-related protein Rab-2B (216 aa).

Positions 16, 17, 18, 19, 20, and 21 each coordinate GDP. Glycine 16, valine 17, glycine 18, lysine 19, serine 20, cysteine 21, and threonine 38 together coordinate GTP. Serine 20 contacts Mg(2+). Residues 37–42 carry the Switch 1 motif; it reads LTIGVE. The Mg(2+) site is built by threonine 38 and aspartate 61. The Switch 2 motif lies at 63 to 72; it reads AGQESFRSIT. The GTP site is built by glycine 64, asparagine 119, lysine 120, aspartate 122, alanine 150, and lysine 151. Residue asparagine 119 coordinates GDP. Positions 122, 150, and 151 each coordinate GDP. Residues 189–216 form a disordered region; that stretch reads PQQSISTSVGPSASQRNSRDIGSNSGCC. Serine 202 carries the phosphoserine modification. Residues cysteine 215 and cysteine 216 are each lipidated (S-geranylgeranyl cysteine).

Belongs to the small GTPase superfamily. Rab family. Interacts (in GTP-bound form) with GARIN4 (via N-terminus). Interacts (in GTP-bound form) with GARIN5A. Interacts (in GTP-bound form) with GARIN1B. Interacts with VPS39 and VPS41. Mg(2+) serves as cofactor. Expressed in kidney, prostate, lung, liver, thymus, colon, pancreas, and skeletal muscle, and low levels in placenta. Not detected in heart, brain, spleen, testis, ovary, small intestine and leukocyte.

It localises to the cell membrane. It is found in the endoplasmic reticulum membrane. The protein localises to the golgi apparatus membrane. Its subcellular location is the cytoplasmic vesicle. The protein resides in the secretory vesicle. It localises to the acrosome. It is found in the autophagosome membrane. The enzyme catalyses GTP + H2O = GDP + phosphate + H(+). Regulated by guanine nucleotide exchange factors (GEFs) which promote the exchange of bound GDP for free GTP, GTPase activating proteins (GAPs) which increase the GTP hydrolysis activity, and GDP dissociation inhibitors (GDIs) which inhibit the dissociation of the nucleotide from the GTPase. The small GTPases Rab are key regulators of intracellular membrane trafficking, from the formation of transport vesicles to their fusion with membranes. Rabs cycle between active GTP-bound and inactive GDP-bound states. In their active state, drive transport of vesicular carriers from donor organelles to acceptor organelles to regulate the membrane traffic that maintains organelle identity and morphology. Regulates the compacted morphology of the Golgi. Promotes cytosolic DNA-induced innate immune responses. Regulates IFN responses against DNA viruses by regulating the CGAS-STING signaling axis. Together with RAB2A redundantly required for efficient autophagic flux. The protein is Ras-related protein Rab-2B of Homo sapiens (Human).